Reading from the N-terminus, the 467-residue chain is Chromosomal replication initiator protein DnaA (467 aa).

The tract at residues 1-80 (MTSELWHQCL…APRISLKIGS (80 aa)) is domain I, interacts with DnaA modulators. Positions 80 to 130 (SITGNSKGQQASKDSAVGATRTTAPSRPVIADVAPSGERNVTVEGAIKHES) are domain II. Residues 131-347 (YLNPTFTFET…GALKLVIANA (217 aa)) form a domain III, AAA+ region region. Residues Gly175, Gly177, Lys178, and Thr179 each coordinate ATP. Positions 348 to 467 (HFTGQEITPA…YQNFMRMLTS (120 aa)) are domain IV, binds dsDNA.

It belongs to the DnaA family. Oligomerizes as a right-handed, spiral filament on DNA at oriC.

Its subcellular location is the cytoplasm. In terms of biological role, plays an essential role in the initiation and regulation of chromosomal replication. ATP-DnaA binds to the origin of replication (oriC) to initiate formation of the DNA replication initiation complex once per cell cycle. Binds the DnaA box (a 9 base pair repeat at the origin) and separates the double-stranded (ds)DNA. Forms a right-handed helical filament on oriC DNA; dsDNA binds to the exterior of the filament while single-stranded (ss)DNA is stabiized in the filament's interior. The ATP-DnaA-oriC complex binds and stabilizes one strand of the AT-rich DNA unwinding element (DUE), permitting loading of DNA polymerase. After initiation quickly degrades to an ADP-DnaA complex that is not apt for DNA replication. Binds acidic phospholipids. The protein is Chromosomal replication initiator protein DnaA of Hahella chejuensis (strain KCTC 2396).